The chain runs to 393 residues: Phosphoglycerate kinase (393 aa).

Residues 21–23 (DLN), Arg36, 59–62 (HLGR), Arg114, and Arg147 contribute to the substrate site. ATP-binding positions include Lys198, Glu320, and 346 to 349 (GGDT).

Belongs to the phosphoglycerate kinase family. In terms of assembly, monomer.

The protein resides in the cytoplasm. The enzyme catalyses (2R)-3-phosphoglycerate + ATP = (2R)-3-phospho-glyceroyl phosphate + ADP. It functions in the pathway carbohydrate degradation; glycolysis; pyruvate from D-glyceraldehyde 3-phosphate: step 2/5. The polypeptide is Phosphoglycerate kinase (Methylobacillus flagellatus (strain ATCC 51484 / DSM 6875 / VKM B-1610 / KT)).